The following is a 424-amino-acid chain: Dihydroorotase (424 aa).

Zn(2+) is bound by residues His-60 and His-62. Substrate is bound by residues 62-64 (HFR) and Asn-94. Residues Asp-151, His-178, and His-231 each coordinate Zn(2+). Asn-277 is a binding site for substrate. Position 304 (Asp-304) interacts with Zn(2+). Residue Asp-304 is part of the active site. Position 308 (His-308) interacts with substrate.

Belongs to the metallo-dependent hydrolases superfamily. DHOase family. Class I DHOase subfamily. Zn(2+) serves as cofactor.

It carries out the reaction (S)-dihydroorotate + H2O = N-carbamoyl-L-aspartate + H(+). Its pathway is pyrimidine metabolism; UMP biosynthesis via de novo pathway; (S)-dihydroorotate from bicarbonate: step 3/3. Catalyzes the reversible cyclization of carbamoyl aspartate to dihydroorotate. This Clostridium acetobutylicum (strain ATCC 824 / DSM 792 / JCM 1419 / IAM 19013 / LMG 5710 / NBRC 13948 / NRRL B-527 / VKM B-1787 / 2291 / W) protein is Dihydroorotase.